Consider the following 479-residue polypeptide: MVHSSMGAPEIRMSKPLEAEKQGLDSPSEHTDTERNGPDTNHQNPQNKTSPFSVSPTGPSTKIKAEDPSGDSAPAAPLPPQPAQPHLPQAQLMLTGSQLAGDIQQLLQLQQLVLVPGHHLQPPAQFLLPQAQQSQPGLLPTPNLFQLPQQTQGALLTSQPRAGLPTQAVTRPTLPDPHLSHPQPPKCLEPPSHPEEPSDLEELEQFARTFKQRRIKLGFTQGDVGLAMGKLYGNDFSQTTISRFEALNLSFKNMCKLKPLLEKWLNDAETMSVDSSLPSPNQLSSPSLGFDGLPGRRRKKRTSIETNVRFALEKSFLANQKPTSEEILLIAEQLHMEKEVIRVWFCNRRQKEKRINPCSAAPMLPSPGKPASYSPHMVTPQGGAGTLPLSQASSSLSTTVTTLSSAVGTLHPSRTAGGGGGGGGAAPPLNSIPSVTPPPPATTNSTNPSPQGSHSAIGLSGLNPSTGPGLWWNPAPYQP.

Disordered regions lie at residues 1–86 (MVHS…AQPH), 166–200 (TQAV…PSDL), 275–298 (SSLP…GRRR), 357–393 (PCSA…SQAS), and 409–479 (TLHP…PYQP). Positions 12-37 (RMSKPLEAEKQGLDSPSEHTDTERNG) are enriched in basic and acidic residues. Polar residues predominate over residues 38–60 (PDTNHQNPQNKTSPFSVSPTGPS). Residues 76-85 (APLPPQPAQP) are compositionally biased toward pro residues. In terms of domain architecture, POU-specific spans 195-269 (EEPSDLEELE…LLEKWLNDAE (75 aa)). Residues 275-288 (SSLPSPNQLSSPSL) show a composition bias toward low complexity. A DNA-binding region (homeobox) is located at residues 297–356 (RRKKRTSIETNVRFALEKSFLANQKPTSEEILLIAEQLHMEKEVIRVWFCNRRQKEKRIN). The segment at 389–410 (LSQASSSLSTTVTTLSSAVGTL) is leucine-zipper. Over residues 416–425 (AGGGGGGGGA) the composition is skewed to gly residues.

The protein belongs to the POU transcription factor family. Class-2 subfamily. Interacts with NR3C1, AR and PGR. Interacts with POU2AF1; the interaction increases POU2F2 transactivation activity. Isoform 3 is B-cell specific. Isoform 5 is expressed in B-cells and the immunoglobulin-expressing T-cell line MOLT-4, but not in the T-cell line BW5147.

The protein localises to the cytoplasm. It is found in the nucleus. With respect to regulation, transactivation activity is enhanced by transcriptional coactivator POU2AF1. Its function is as follows. Transcription factor that specifically binds to the octamer motif (5'-ATTTGCAT-3'). Regulates IL6 expression in B cells with POU2AF1. Regulates transcription in a number of tissues in addition to activating immunoglobulin gene expression. Modulates transcription transactivation by NR3C1, AR and PGR. Activates the U2 small nuclear RNA (snRNA) promoter. The sequence is that of POU domain, class 2, transcription factor 2 from Homo sapiens (Human).